The primary structure comprises 147 residues: Lysozyme C (147 aa).

An N-terminal signal peptide occupies residues 1–18; it reads MKALVILGFLFLSVAVQG. Residues 19 to 147 enclose the C-type lysozyme domain; it reads KVFERCELAR…VSSYVEGCTL (129 aa). 4 cysteine pairs are disulfide-bonded: cysteine 24–cysteine 145, cysteine 48–cysteine 133, cysteine 83–cysteine 99, and cysteine 95–cysteine 113. Residues glutamate 53 and aspartate 71 contribute to the active site.

It belongs to the glycosyl hydrolase 22 family. In terms of assembly, monomer. As to expression, stomach-specific.

It carries out the reaction Hydrolysis of (1-&gt;4)-beta-linkages between N-acetylmuramic acid and N-acetyl-D-glucosamine residues in a peptidoglycan and between N-acetyl-D-glucosamine residues in chitodextrins.. Functionally, lysozymes have primarily a bacteriolytic function; those in tissues and body fluids are associated with the monocyte-macrophage system and enhance the activity of immunoagents. This chain is Lysozyme C (LYZ1), found in Bos taurus (Bovine).